Here is a 173-residue protein sequence, read N- to C-terminus: Photosystem I assembly protein Ycf3 (173 aa).

3 TPR repeats span residues alanine 35–threonine 68, glycine 72–leucine 105, and glycine 120–asparagine 153.

It belongs to the Ycf3 family.

The protein localises to the cellular thylakoid membrane. Essential for the assembly of the photosystem I (PSI) complex. May act as a chaperone-like factor to guide the assembly of the PSI subunits. In Nostoc punctiforme (strain ATCC 29133 / PCC 73102), this protein is Photosystem I assembly protein Ycf3.